The sequence spans 499 residues: Probable alginate O-acetylase AlgI (499 aa).

The next 11 membrane-spanning stretches (helical) occupy residues 7-25, 40-62, 78-100, 115-137, 150-172, 239-261, 312-334, 354-373, 380-397, 407-429, and 475-497; these read VFLF…LSPA, YAWW…YWIG, WLTL…NFGV, FVVT…ISYI, NLVD…VLRF, LYFD…GFRF, ILTM…WGAW, IRPL…WVIF, VAWR…WTLS, LQIA…QFYA, and VLLL…FLYF. H322 is an active-site residue.

Belongs to the membrane-bound acyltransferase family.

It localises to the cell inner membrane. It functions in the pathway glycan biosynthesis; alginate biosynthesis. Its function is as follows. Together with AlgJ and AlgF, forms an inner membrane complex which probably interacts with the alginate polymerization-transport complex and adds acetyl groups at the O-2 and O-3 positions of mannuronate residues. Acetylation of alginate increases cyst resistance to desiccation. This is Probable alginate O-acetylase AlgI (algI) from Azotobacter vinelandii.